A 477-amino-acid polypeptide reads, in one-letter code: Nitrogenase molybdenum-iron protein alpha chain (477 aa).

3 residues coordinate [8Fe-7S] cluster: cysteine 49, cysteine 75, and cysteine 149. [7Fe-Mo-9S-C-homocitryl] cluster-binding residues include cysteine 267 and histidine 433.

Belongs to the NifD/NifK/NifE/NifN family. As to quaternary structure, tetramer of two alpha and two beta chains. Forms complex with the iron protein (nitrogenase component 2). The cofactor is [8Fe-7S] cluster. [7Fe-Mo-9S-C-homocitryl] cluster is required as a cofactor.

It catalyses the reaction N2 + 8 reduced [2Fe-2S]-[ferredoxin] + 16 ATP + 16 H2O = H2 + 8 oxidized [2Fe-2S]-[ferredoxin] + 2 NH4(+) + 16 ADP + 16 phosphate + 6 H(+). Functionally, this molybdenum-iron protein is part of the nitrogenase complex that catalyzes the key enzymatic reactions in nitrogen fixation. In Methanococcus maripaludis (Methanococcus deltae), this protein is Nitrogenase molybdenum-iron protein alpha chain (nifD).